A 109-amino-acid chain; its full sequence is T cell receptor alpha variable 25 (109 aa).

An N-terminal signal peptide occupies residues 1-19; sequence MLLITSMLVLWMQLSQVNG. Positions 20 to 109 constitute an Ig-like domain; that stretch reads QQVMQIPQYQ…TDVGTYFCAG (90 aa). A disulfide bond links cysteine 41 and cysteine 107. N-linked (GlcNAc...) asparagine glycans are attached at residues asparagine 42 and asparagine 89.

Alpha-beta TR is a heterodimer composed of an alpha and beta chain; disulfide-linked. The alpha-beta TR is associated with the transmembrane signaling CD3 coreceptor proteins to form the TR-CD3 (TcR or TCR). The assembly of alpha-beta TR heterodimers with CD3 occurs in the endoplasmic reticulum where a single alpha-beta TR heterodimer associates with one CD3D-CD3E heterodimer, one CD3G-CD3E heterodimer and one CD247 homodimer forming a stable octameric structure. CD3D-CD3E and CD3G-CD3E heterodimers preferentially associate with TR alpha and TR beta chains, respectively. The association of the CD247 homodimer is the last step of TcR assembly in the endoplasmic reticulum and is required for transport to the cell surface.

It localises to the cell membrane. Its function is as follows. V region of the variable domain of T cell receptor (TR) alpha chain that participates in the antigen recognition. Alpha-beta T cell receptors are antigen specific receptors which are essential to the immune response and are present on the cell surface of T lymphocytes. Recognize peptide-major histocompatibility (MH) (pMH) complexes that are displayed by antigen presenting cells (APC), a prerequisite for efficient T cell adaptive immunity against pathogens. Binding of alpha-beta TR to pMH complex initiates TR-CD3 clustering on the cell surface and intracellular activation of LCK that phosphorylates the ITAM motifs of CD3G, CD3D, CD3E and CD247 enabling the recruitment of ZAP70. In turn ZAP70 phosphorylates LAT, which recruits numerous signaling molecules to form the LAT signalosome. The LAT signalosome propagates signal branching to three major signaling pathways, the calcium, the mitogen-activated protein kinase (MAPK) kinase and the nuclear factor NF-kappa-B (NF-kB) pathways, leading to the mobilization of transcription factors that are critical for gene expression and essential for T cell growth and differentiation. The T cell repertoire is generated in the thymus, by V-(D)-J rearrangement. This repertoire is then shaped by intrathymic selection events to generate a peripheral T cell pool of self-MH restricted, non-autoaggressive T cells. Post-thymic interaction of alpha-beta TR with the pMH complexes shapes TR structural and functional avidity. The protein is T cell receptor alpha variable 25 of Homo sapiens (Human).